The chain runs to 1090 residues: UPF0507 protein C1Q_01007 (1090 aa).

A VPS9 domain is found at 289-436 (FSVNQLLTDF…FEDFNKNTGN (148 aa)).

It belongs to the UPF0507 family.

The chain is UPF0507 protein C1Q_01007 from Saccharomyces cerevisiae (strain JAY291) (Baker's yeast).